The following is a 435-amino-acid chain: MRVLILGSGVIGTTSAWYLSKAGCEVVVVDRQSGAGLETSYANGGQLSFGYTSPWAAPGVPLKAVRWLFERHAPLSIRPTTDWNQYVWLARMLRHCSAERYAVNKSRMLRLSEYSREALEALSAETGITFEGRHLGTIQLFRTQQQLDVVVRDIELLTQYGIPYEVLSPSQISKFEPGLADGSVRFPGALRLPHDQTGDCCLFTQRLAALAAKRGVEFRYGCTVQRLEVDGPRVTGAWINGALERADCCVVALGSYSPLLLAPLGLRLPVYPLKGFSLTLPMIDASRAPVSTVLDESYKVAVTRFDERIRVAGMAEVSGYDVSLNPRRRATLEMVVQDVYPGCGDLGRGEFWTGLRPATPDGTPVIGATPYQGLFLNTGHGTLGWTMSSGSGRYLADLICCRPCEISSEGLDMFRYLVSTIPCPQECAPCVPPTP.

3–17 (VLILGSGVIGTTSAW) is a binding site for FAD.

Belongs to the DadA oxidoreductase family. The cofactor is FAD.

It catalyses the reaction a D-alpha-amino acid + A + H2O = a 2-oxocarboxylate + AH2 + NH4(+). Its pathway is amino-acid degradation; D-alanine degradation; NH(3) and pyruvate from D-alanine: step 1/1. Functionally, oxidative deamination of D-amino acids. The chain is D-amino acid dehydrogenase from Xylella fastidiosa (strain 9a5c).